A 333-amino-acid polypeptide reads, in one-letter code: Arylacetonitrilase (333 aa).

The CN hydrolase domain maps to 9-284 (VRVAVTQAEP…EGIIYADLEM (276 aa)). The active-site Proton acceptor is Glu49. The active site involves Lys129. Residue Cys164 is the Nucleophile of the active site.

It belongs to the carbon-nitrogen hydrolase superfamily. Nitrilase family.

It catalyses the reaction a nitrile + 2 H2O = a carboxylate + NH4(+). The enzyme catalyses 4-chlorophenylacetonitrile + 2 H2O = 4-chlorophenylacetate + NH4(+). Its function is as follows. Nitrilase that hydrolyzes preferentially phenylacetonitrile, (R,S)-mandelonitrile, and 3-indolylacetonitrile. In Aspergillus oryzae (strain ATCC 42149 / RIB 40) (Yellow koji mold), this protein is Arylacetonitrilase.